Reading from the N-terminus, the 352-residue chain is Cobalt transport protein NhlF (352 aa).

A run of 8 helical transmembrane segments spans residues 23-43, 46-66, 95-115, 131-151, 206-226, 230-250, 290-310, and 323-343; these read LASV…LYLG, GNPA…VLGV, VGFF…LVVA, EIGG…VAGL, PVGL…LLTL, AATG…LFAA, VIGL…LPMF, and FEFL…GALL.

The protein belongs to the NiCoT transporter (TC 2.A.52) family.

The protein localises to the cell membrane. Cobalt uptake is inhibited by uncouplers (CCCP and 3,5-di-tert-butyl-4-hydroxybenzylidenemalononitrile) and by the addition of excess nickel. Its function is as follows. Mediates energy-dependent uptake of cobalt ions into the cell. Can also transport nickel ions, but cobalt is the preferred substrate. The sequence is that of Cobalt transport protein NhlF (nhlF) from Rhodococcus rhodochrous.